The sequence spans 171 residues: Lipoprotein signal peptidase (171 aa).

3 consecutive transmembrane segments (helical) span residues 7–27, 64–84, and 88–108; these read GLIALLATLALDQASKLWLYF, LGRWLLVAVSLAAVIGLSVWM, and GSRLLAVALGLIVGGALGNAI. Active-site residues include aspartate 118 and aspartate 136. Residues 128 to 148 form a helical membrane-spanning segment; the sequence is SWYVFNVADAAIVAGVVGLIL.

The protein belongs to the peptidase A8 family.

It is found in the cell inner membrane. The catalysed reaction is Release of signal peptides from bacterial membrane prolipoproteins. Hydrolyzes -Xaa-Yaa-Zaa-|-(S,diacylglyceryl)Cys-, in which Xaa is hydrophobic (preferably Leu), and Yaa (Ala or Ser) and Zaa (Gly or Ala) have small, neutral side chains.. It functions in the pathway protein modification; lipoprotein biosynthesis (signal peptide cleavage). Its function is as follows. This protein specifically catalyzes the removal of signal peptides from prolipoproteins. This chain is Lipoprotein signal peptidase, found in Methylorubrum extorquens (strain PA1) (Methylobacterium extorquens).